Reading from the N-terminus, the 37-residue chain is Large ribosomal subunit protein bL36c (37 aa).

The protein belongs to the bacterial ribosomal protein bL36 family.

The protein resides in the plastid. The protein localises to the chloroplast. The sequence is that of Large ribosomal subunit protein bL36c from Pinus koraiensis (Korean pine).